The sequence spans 550 residues: CTP synthase (550 aa).

An amidoligase domain region spans residues 1–270; the sequence is MTKFVFVTGG…DRLICEELRL (270 aa). Serine 13 provides a ligand contact to CTP. Serine 13 lines the UTP pocket. Residues 14–19 and aspartate 71 contribute to the ATP site; that span reads SLGKGI. Mg(2+)-binding residues include aspartate 71 and glutamate 144. CTP contacts are provided by residues 151–153, 191–196, and lysine 227; these read DIE and KTKPTQ. Residues 191 to 196 and lysine 227 contribute to the UTP site; that span reads KTKPTQ. Residues 295 to 547 enclose the Glutamine amidotransferase type-1 domain; that stretch reads TIGMVGKYVD…VEAALASQQR (253 aa). Glycine 356 is an L-glutamine binding site. Cysteine 383 (nucleophile; for glutamine hydrolysis) is an active-site residue. Residues 384 to 387, glutamate 407, and arginine 473 each bind L-glutamine; that span reads LGMQ. Catalysis depends on residues histidine 520 and glutamate 522.

This sequence belongs to the CTP synthase family. In terms of assembly, homotetramer.

It catalyses the reaction UTP + L-glutamine + ATP + H2O = CTP + L-glutamate + ADP + phosphate + 2 H(+). It carries out the reaction L-glutamine + H2O = L-glutamate + NH4(+). The enzyme catalyses UTP + NH4(+) + ATP = CTP + ADP + phosphate + 2 H(+). It participates in pyrimidine metabolism; CTP biosynthesis via de novo pathway; CTP from UDP: step 2/2. Allosterically activated by GTP, when glutamine is the substrate; GTP has no effect on the reaction when ammonia is the substrate. The allosteric effector GTP functions by stabilizing the protein conformation that binds the tetrahedral intermediate(s) formed during glutamine hydrolysis. Inhibited by the product CTP, via allosteric rather than competitive inhibition. In terms of biological role, catalyzes the ATP-dependent amination of UTP to CTP with either L-glutamine or ammonia as the source of nitrogen. Regulates intracellular CTP levels through interactions with the four ribonucleotide triphosphates. The sequence is that of CTP synthase from Cupriavidus necator (strain ATCC 17699 / DSM 428 / KCTC 22496 / NCIMB 10442 / H16 / Stanier 337) (Ralstonia eutropha).